A 781-amino-acid chain; its full sequence is ATP-dependent RNA helicase rok1 (781 aa).

Disordered stretches follow at residues 7 to 108 (LSRG…KPKL) and 134 to 177 (QDEA…IYPQ). Basic residues predominate over residues 48-57 (KRGKKRKRKG). A compositionally biased stretch (acidic residues) spans 66–75 (SGDEDDDASD). Composition is skewed to basic and acidic residues over residues 84–108 (TPEE…KPKL) and 139–173 (TEEK…DKKQ). The Q motif motif lies at 184–212 (ELKYTYGIHPVLADNITRQGFRVPTEVQM). The region spanning 233–487 (DVKVEKGIDF…TKHIDKRAKR (255 aa)) is the Helicase ATP-binding domain. Position 246 to 253 (246 to 253 (APTGSGKT)) interacts with ATP. Residues 323 to 386 (ESNEQEETEQ…SRAKGDQKFK (64 aa)) form a disordered region. Acidic residues predominate over residues 339 to 369 (QDSDSDSEAESEPEEVMKIDEEEEEEEESDS). Positions 370–386 (DAEKKTESRAKGDQKFK) are enriched in basic and acidic residues. Residues 434–437 (DEAD) carry the DEAD box motif. Residues 527 to 689 (ALRQLLHPVS…GKDIDEKDTV (163 aa)) enclose the Helicase C-terminal domain. The tract at residues 718–781 (RGVESRRTGG…KAEEEWTGLD (64 aa)) is disordered. Positions 736-752 (SWERRRENNRREAIEAS) are enriched in basic and acidic residues.

This sequence belongs to the DEAD box helicase family. DDX52/ROK1 subfamily. As to quaternary structure, interacts with the U3 snoRNA and is associated with the 90S and 40S pre-ribosomes.

It is found in the nucleus. The protein localises to the nucleolus. The enzyme catalyses ATP + H2O = ADP + phosphate + H(+). In terms of biological role, ATP-dependent RNA helicase involved in 40S ribosomal subunit biogenesis. Required for the processing and cleavage of 35S pre-rRNA at sites A0, A1, and A2, leading to mature 18S rRNA. This Neurospora crassa (strain ATCC 24698 / 74-OR23-1A / CBS 708.71 / DSM 1257 / FGSC 987) protein is ATP-dependent RNA helicase rok1 (drh-16).